Here is a 120-residue protein sequence, read N- to C-terminus: Large ribosomal subunit protein uL18 (120 aa).

It belongs to the universal ribosomal protein uL18 family. In terms of assembly, part of the 50S ribosomal subunit; part of the 5S rRNA/L5/L18/L25 subcomplex. Contacts the 5S and 23S rRNAs.

Functionally, this is one of the proteins that bind and probably mediate the attachment of the 5S RNA into the large ribosomal subunit, where it forms part of the central protuberance. The protein is Large ribosomal subunit protein uL18 of Methylobacterium nodulans (strain LMG 21967 / CNCM I-2342 / ORS 2060).